The chain runs to 162 residues: Lipid droplet assembly factor 1-A (162 aa).

Residues 1 to 42 (MASAENLYQEKMQELQKQMNKVMQTINNHSKVEAFLNSPFGQ) are Cytoplasmic-facing. The helical transmembrane segment at 43–63 (YLDQHPFVTLSLLVFISLSAV) threads the bilayer. Residues 64–65 (PV) lie on the Lumenal side of the membrane. Residues 66–86 (GIFLTLIAGTAIAVCLAVLII) form a helical membrane-spanning segment. A topological domain (cytoplasmic) is located at residue E87. The helical transmembrane segment at 88-108 (GIVISVGGIALLCILCGLAVM) threads the bilayer. S109 is a topological domain (lumenal). A helical transmembrane segment spans residues 110–130 (LGVAAVLCVSYVAGSSVLNYI). Residues 131-162 (HAYRVTVGTRGRSGPISLNHETTTAEKSYRSS) are Cytoplasmic-facing.

The protein belongs to the LDAF1 family.

The protein localises to the endoplasmic reticulum membrane. It is found in the lipid droplet. Functionally, plays an important role in the formation of lipid droplets (LD) which are storage organelles at the center of lipid and energy homeostasis. In Xenopus laevis (African clawed frog), this protein is Lipid droplet assembly factor 1-A.